A 356-amino-acid polypeptide reads, in one-letter code: sn-glycerol-3-phosphate import ATP-binding protein UgpC (356 aa).

Positions 4–235 constitute an ABC transporter domain; it reads LKLQAVTKSW…PASRFVASFI (232 aa). Residue 37–44 coordinates ATP; it reads GPSGCGKS.

Belongs to the ABC transporter superfamily. sn-glycerol-3-phosphate importer (TC 3.A.1.1.3) family. In terms of assembly, the complex is composed of two ATP-binding proteins (UgpC), two transmembrane proteins (UgpA and UgpE) and a solute-binding protein (UgpB).

It is found in the cell inner membrane. It carries out the reaction sn-glycerol 3-phosphate(out) + ATP + H2O = sn-glycerol 3-phosphate(in) + ADP + phosphate + H(+). Functionally, part of the ABC transporter complex UgpBAEC involved in sn-glycerol-3-phosphate (G3P) import. Responsible for energy coupling to the transport system. This is sn-glycerol-3-phosphate import ATP-binding protein UgpC from Salmonella typhi.